The sequence spans 216 residues: DDB1- and CUL4-associated factor 16 (216 aa).

The disordered stretch occupies residues 1–42 (MGPRNPSPDHLSESESEEEENISYLNESSGEEWDSSEEEDSM). Positions 29 to 41 (SGEEWDSSEEEDS) are enriched in acidic residues. At Lys-61 the chain carries N6-acetyllysine.

In terms of assembly, interacts with DDB1 and CUL4A.

The protein localises to the nucleus. The protein operates within protein modification; protein ubiquitination. Its function is as follows. Functions as a substrate recognition component for CUL4-DDB1 E3 ubiquitin-protein ligase complex, which mediates ubiquitination and proteasome-dependent degradation of nuclear proteins. The protein is DDB1- and CUL4-associated factor 16 of Homo sapiens (Human).